A 79-amino-acid polypeptide reads, in one-letter code: Acyl carrier protein (79 aa).

The 76-residue stretch at 2–77 folds into the Carrier domain; that stretch reads SEIGERVKKI…DATKFLEKNA (76 aa). Position 37 is an O-(pantetheine 4'-phosphoryl)serine (S37).

Belongs to the acyl carrier protein (ACP) family. Post-translationally, 4'-phosphopantetheine is transferred from CoA to a specific serine of apo-ACP by AcpS. This modification is essential for activity because fatty acids are bound in thioester linkage to the sulfhydryl of the prosthetic group.

The protein localises to the cytoplasm. Its pathway is lipid metabolism; fatty acid biosynthesis. In terms of biological role, carrier of the growing fatty acid chain in fatty acid biosynthesis. In Rhodopseudomonas palustris (strain HaA2), this protein is Acyl carrier protein.